We begin with the raw amino-acid sequence, 259 residues long: Global transcriptional regulator CodY (259 aa).

Residues 1–155 form a GAF domain region; the sequence is MALLQKTRII…GATVVGMEIL (155 aa). A DNA-binding region (H-T-H motif) is located at residues 203–222; the sequence is ASKIADRVGITRSVIVNALR. Phosphoserine is present on S215.

It belongs to the CodY family.

It localises to the cytoplasm. DNA-binding global transcriptional regulator which is involved in the adaptive response to starvation and acts by directly or indirectly controlling the expression of numerous genes in response to nutrient availability. During rapid exponential growth, CodY is highly active and represses genes whose products allow adaptation to nutrient depletion. The protein is Global transcriptional regulator CodY of Bacillus velezensis (strain DSM 23117 / BGSC 10A6 / LMG 26770 / FZB42) (Bacillus amyloliquefaciens subsp. plantarum).